A 207-amino-acid chain; its full sequence is LexA repressor (207 aa).

Positions 29-49 (VREICSAVDLSSTSTVHGHLA) form a DNA-binding region, H-T-H motif. Active-site for autocatalytic cleavage activity residues include Ser128 and Lys166.

This sequence belongs to the peptidase S24 family. In terms of assembly, homodimer.

It carries out the reaction Hydrolysis of Ala-|-Gly bond in repressor LexA.. Its function is as follows. Represses a number of genes involved in the response to DNA damage (SOS response), including recA and lexA. In the presence of single-stranded DNA, RecA interacts with LexA causing an autocatalytic cleavage which disrupts the DNA-binding part of LexA, leading to derepression of the SOS regulon and eventually DNA repair. The sequence is that of LexA repressor from Lactobacillus gasseri (strain ATCC 33323 / DSM 20243 / BCRC 14619 / CIP 102991 / JCM 1131 / KCTC 3163 / NCIMB 11718 / NCTC 13722 / AM63).